The chain runs to 243 residues: Tryptophan synthase alpha chain (243 aa).

Active-site proton acceptor residues include glutamate 32 and aspartate 43.

The protein belongs to the TrpA family. As to quaternary structure, tetramer of two alpha and two beta chains.

The protein localises to the plastid. The protein resides in the chloroplast. It carries out the reaction (1S,2R)-1-C-(indol-3-yl)glycerol 3-phosphate + L-serine = D-glyceraldehyde 3-phosphate + L-tryptophan + H2O. Its pathway is amino-acid biosynthesis; L-tryptophan biosynthesis; L-tryptophan from chorismate: step 5/5. Its function is as follows. The alpha subunit is responsible for the aldol cleavage of indoleglycerol phosphate to indole and glyceraldehyde 3-phosphate. The chain is Tryptophan synthase alpha chain from Cyanidioschyzon merolae (strain NIES-3377 / 10D) (Unicellular red alga).